Consider the following 199-residue polypeptide: N-(5'-phosphoribosyl)anthranilate isomerase (199 aa).

This sequence belongs to the TrpF family.

The enzyme catalyses N-(5-phospho-beta-D-ribosyl)anthranilate = 1-(2-carboxyphenylamino)-1-deoxy-D-ribulose 5-phosphate. It functions in the pathway amino-acid biosynthesis; L-tryptophan biosynthesis; L-tryptophan from chorismate: step 3/5. The sequence is that of N-(5'-phosphoribosyl)anthranilate isomerase from Sulfolobus acidocaldarius (strain ATCC 33909 / DSM 639 / JCM 8929 / NBRC 15157 / NCIMB 11770).